Consider the following 318-residue polypeptide: NADH-ubiquinone oxidoreductase chain 1 (318 aa).

Helical transmembrane passes span 2–22 (PVINLLLLTMSILIAMAFLML), 69–89 (ILYIVSPALALTIALLLWTPL), 100–120 (LGLLFILATSSLTVYSILWSG), 146–166 (LALILLSVLLMSGSFNLSTLI), 171–191 (HSWLLLPSWPLALMWFISTLA), 222–242 (LFFMAEYTNIILMNALTAMIF), 253–273 (ELHTTLFTIKTLLLTSLFLWI), and 294–314 (LPLTLALLMWHISMPITTSGI).

It belongs to the complex I subunit 1 family. In terms of assembly, core subunit of respiratory chain NADH dehydrogenase (Complex I) which is composed of 45 different subunits.

It localises to the mitochondrion inner membrane. The catalysed reaction is a ubiquinone + NADH + 5 H(+)(in) = a ubiquinol + NAD(+) + 4 H(+)(out). Functionally, core subunit of the mitochondrial membrane respiratory chain NADH dehydrogenase (Complex I) which catalyzes electron transfer from NADH through the respiratory chain, using ubiquinone as an electron acceptor. Essential for the catalytic activity and assembly of complex I. This is NADH-ubiquinone oxidoreductase chain 1 (MT-ND1) from Pongo pygmaeus (Bornean orangutan).